The primary structure comprises 487 residues: ATP synthase subunit beta (487 aa).

164–171 (GGAGVGKT) lines the ATP pocket.

It belongs to the ATPase alpha/beta chains family. In terms of assembly, F-type ATPases have 2 components, CF(1) - the catalytic core - and CF(0) - the membrane proton channel. CF(1) has five subunits: alpha(3), beta(3), gamma(1), delta(1), epsilon(1). CF(0) has four main subunits: a(1), b(1), b'(1) and c(9-12).

The protein localises to the cellular thylakoid membrane. It carries out the reaction ATP + H2O + 4 H(+)(in) = ADP + phosphate + 5 H(+)(out). Functionally, produces ATP from ADP in the presence of a proton gradient across the membrane. The catalytic sites are hosted primarily by the beta subunits. The sequence is that of ATP synthase subunit beta from Synechococcus sp. (strain CC9311).